The sequence spans 84 residues: Small ribosomal subunit protein uS17 (84 aa).

It belongs to the universal ribosomal protein uS17 family. As to quaternary structure, part of the 30S ribosomal subunit.

One of the primary rRNA binding proteins, it binds specifically to the 5'-end of 16S ribosomal RNA. This chain is Small ribosomal subunit protein uS17, found in Yersinia enterocolitica serotype O:8 / biotype 1B (strain NCTC 13174 / 8081).